The following is a 367-amino-acid chain: Uroporphyrinogen decarboxylase (367 aa).

An N-acetylmethionine modification is found at M1. The coproporphyrinogen I site is built by R37, A39, R41, R50, D86, Y164, S219, and H339. The coproporphyrinogen III site is built by R37, A39, and R41. Coproporphyrinogen III-binding residues include D86, Y164, S219, and H339.

This sequence belongs to the uroporphyrinogen decarboxylase family. As to quaternary structure, homodimer.

The protein resides in the cytoplasm. The protein localises to the cytosol. The catalysed reaction is uroporphyrinogen III + 4 H(+) = coproporphyrinogen III + 4 CO2. It catalyses the reaction uroporphyrinogen I + 4 H(+) = coproporphyrinogen I + 4 CO2. It participates in porphyrin-containing compound metabolism; protoporphyrin-IX biosynthesis; coproporphyrinogen-III from 5-aminolevulinate: step 4/4. Functionally, catalyzes the sequential decarboxylation of the four acetate side chains of uroporphyrinogen to form coproporphyrinogen and participates in the fifth step in the heme biosynthetic pathway. Isomer I or isomer III of uroporphyrinogen may serve as substrate, but only coproporphyrinogen III can ultimately be converted to heme. In vitro also decarboxylates pentacarboxylate porphyrinogen I. The sequence is that of Uroporphyrinogen decarboxylase from Ovis aries (Sheep).